The primary structure comprises 422 residues: Tyrosine--tRNA ligase (422 aa).

Residue Tyr35 participates in L-tyrosine binding. A 'HIGH' region motif is present at residues Pro40–His49. Positions 169 and 173 each coordinate L-tyrosine. A 'KMSKS' region motif is present at residues Lys229–Thr233. Residue Lys232 participates in ATP binding. Positions Val352–Val418 constitute an S4 RNA-binding domain.

The protein belongs to the class-I aminoacyl-tRNA synthetase family. TyrS type 1 subfamily. Homodimer.

Its subcellular location is the cytoplasm. It catalyses the reaction tRNA(Tyr) + L-tyrosine + ATP = L-tyrosyl-tRNA(Tyr) + AMP + diphosphate + H(+). Catalyzes the attachment of tyrosine to tRNA(Tyr) in a two-step reaction: tyrosine is first activated by ATP to form Tyr-AMP and then transferred to the acceptor end of tRNA(Tyr). The polypeptide is Tyrosine--tRNA ligase (Kineococcus radiotolerans (strain ATCC BAA-149 / DSM 14245 / SRS30216)).